The primary structure comprises 170 residues: MTLLDSSIFRFRLSSLHVSSRSLGVYFAGIMFASAVWVFVDAALYSAFDYARNLHITFIDWIPFLCSILGIVIVNSIDKSRLSGDSFAYTDESLARKARFILFIGFALLAGGLGGSFTVFILKYVVAGYEGKSLLMGSANIISNILFMISATALWITGNMNDDYHYNLQL.

A run of 4 helical transmembrane segments spans residues 23–43, 54–74, 101–121, and 136–156; these read LGVY…VDAA, LHIT…IVIV, ILFI…TVFI, and MGSA…ALWI.

It belongs to the UPF0220 family.

It localises to the membrane. The sequence is that of UPF0220 protein C8D2.02c from Schizosaccharomyces pombe (strain 972 / ATCC 24843) (Fission yeast).